Reading from the N-terminus, the 599-residue chain is NADH-quinone oxidoreductase subunit C/D (599 aa).

The NADH dehydrogenase I subunit C stretch occupies residues 1-190 (MMIDQIAQES…DPFELTRQKE (190 aa)). The tract at residues 214–599 (DFMFLNLGPN…IDFVMSDVDR (386 aa)) is NADH dehydrogenase I subunit D.

It in the N-terminal section; belongs to the complex I 30 kDa subunit family. In the C-terminal section; belongs to the complex I 49 kDa subunit family. In terms of assembly, NDH-1 is composed of 13 different subunits. Subunits NuoB, CD, E, F, and G constitute the peripheral sector of the complex.

It is found in the cell inner membrane. The catalysed reaction is a quinone + NADH + 5 H(+)(in) = a quinol + NAD(+) + 4 H(+)(out). NDH-1 shuttles electrons from NADH, via FMN and iron-sulfur (Fe-S) centers, to quinones in the respiratory chain. The immediate electron acceptor for the enzyme in this species is believed to be ubiquinone. Couples the redox reaction to proton translocation (for every two electrons transferred, four hydrogen ions are translocated across the cytoplasmic membrane), and thus conserves the redox energy in a proton gradient. The chain is NADH-quinone oxidoreductase subunit C/D from Photorhabdus laumondii subsp. laumondii (strain DSM 15139 / CIP 105565 / TT01) (Photorhabdus luminescens subsp. laumondii).